Reading from the N-terminus, the 450-residue chain is MDNKLFGTDGLRGRVNAYPMTPDVVMRLALSAGLHFRNGSRRHKVLIGKDTRRSGYIYEYALSSGFCAAGMDVFLTGPLPTPAISFLTRDMRADVGVVISASHNPACDNGIKFFDHMGFKLPDAVEAEIAARVEGYAQDWRLPDPDHVGRAFKLEDSPGRYNVFLKNSIPLDVNFEGLKIVLDCAHGAAYRVTPQVFEELGAKVIKIGVDPDGSNINQRVGSLFPQQVARMVAEAEADIGIALDGDADRVIVADEKGRILDGDQIMAICALDLMERGALPGNLLVATVMSNMALEVFMKDHGGRLLRTPVGDRYVVEAMRAQGAVFGGEQSGHLIFLNHSTTGDGTLAALQLMKIMVRKGKPLSELATLLSPFPQKLVNVPVARKIPFSEAPAIEAAVKDAEATLSGRGRVLLRYSGTESLARVMVEAQDAALVESLCDSLAEVVARALA.

Ser102 (phosphoserine intermediate) is an active-site residue. Residues Ser102, Asp244, Asp246, and Asp248 each contribute to the Mg(2+) site. The residue at position 102 (Ser102) is a Phosphoserine.

This sequence belongs to the phosphohexose mutase family. The cofactor is Mg(2+). Post-translationally, activated by phosphorylation.

It catalyses the reaction alpha-D-glucosamine 1-phosphate = D-glucosamine 6-phosphate. Functionally, catalyzes the conversion of glucosamine-6-phosphate to glucosamine-1-phosphate. The chain is Phosphoglucosamine mutase from Solidesulfovibrio magneticus (strain ATCC 700980 / DSM 13731 / RS-1) (Desulfovibrio magneticus).